A 223-amino-acid chain; its full sequence is Noggin-3 (223 aa).

An N-terminal signal peptide occupies residues 1–23 (MDNIPYFLATVLIFSLGFRIEEG). N-linked (GlcNAc...) asparagine glycans are attached at residues Asn-60 and Asn-93.

It belongs to the noggin family. Homodimer; disulfide-linked.

It localises to the secreted. Its function is as follows. May function as an inhibitor of bone morphogenetic proteins (BMP) signaling during later stages of development including late phases of dorsoventral patterning, to refine the early pattern set up by the interaction of chordino and BMP2/4. Not involved in organizer function or early phases of dorsoventral pattern formation. The sequence is that of Noggin-3 (nog3) from Danio rerio (Zebrafish).